The primary structure comprises 356 residues: Phosphoribosylformylglycinamidine cyclo-ligase (356 aa).

Belongs to the AIR synthase family.

Its subcellular location is the cytoplasm. The catalysed reaction is 2-formamido-N(1)-(5-O-phospho-beta-D-ribosyl)acetamidine + ATP = 5-amino-1-(5-phospho-beta-D-ribosyl)imidazole + ADP + phosphate + H(+). It participates in purine metabolism; IMP biosynthesis via de novo pathway; 5-amino-1-(5-phospho-D-ribosyl)imidazole from N(2)-formyl-N(1)-(5-phospho-D-ribosyl)glycinamide: step 2/2. This chain is Phosphoribosylformylglycinamidine cyclo-ligase, found in Sinorhizobium medicae (strain WSM419) (Ensifer medicae).